Reading from the N-terminus, the 755-residue chain is LIM domain and actin-binding protein 1 (755 aa).

Met-1 bears the N-acetylmethionine mark. Residue Ser-15 is modified to Phosphoserine. The span at 43-56 shows a compositional bias: basic and acidic residues; it reads KAAEEANMERKKNN. The tract at residues 43–151 is disordered; it reads KAAEEANMER…YPRSEDSHDF (109 aa). A compositionally biased stretch (polar residues) spans 88-97; it reads DSLPNSSSDG. At Ser-132 the chain carries Phosphoserine. The Required for interaction with NPC1L1 signature appears at 164 to 166; the sequence is CLG. 2 stretches are compositionally biased toward basic and acidic residues: residues 168 to 177 and 199 to 208; these read SRHEAEKPEM and MMFEKGEHSQ. The segment at 168–226 is disordered; the sequence is SRHEAEKPEMSENTETSGKIEKYNVPLNRLKMMFEKGEHSQNKSPWTQGRNAGGRRLSE. Phosphoserine is present on residues Ser-225, Ser-230, and Ser-242. A disordered region spans residues 241-379; it reads LSSSAFNSEK…ESSPSKTAKK (139 aa). Basic and acidic residues predominate over residues 249 to 258; sequence EKNESKRNLE. Position 263 is a phosphoserine (Ser-263). Residues 292–305 are compositionally biased toward basic and acidic residues; sequence KPSESKTHKWEQKE. The span at 342-354 shows a compositional bias: polar residues; it reads CNSQGRSEAQQPI. Residues Ser-348, Ser-360, Ser-367, and Ser-372 each carry the phosphoserine modification. Over residues 363 to 375 the composition is skewed to polar residues; the sequence is ARTSSLPESSPSK. The LIM zinc-binding domain occupies 386–446; that stretch reads ESCVECQKTV…KPHFNQLFKS (61 aa). Lys-437 bears the N6-succinyllysine mark. Disordered regions lie at residues 468–493 and 505–714; these read ENEE…GVED and SMEA…DTTT. A Phosphoserine modification is found at Ser-488. A required for interaction with MYO5B region spans residues 491–511; that stretch reads VEDAPIAKVGVLAASMEAKAS. Basic and acidic residues-rich tracts occupy residues 512 to 526 and 555 to 566; these read SQRE…ETKK and WPPEDEVCKTEA. Residues 599-611 show a composition bias toward low complexity; sequence SSVKSPKPLSPSL. Residues Ser-600, Ser-603, Ser-608, and Ser-616 each carry the phosphoserine modification. Composition is skewed to basic and acidic residues over residues 638–653 and 662–673; these read RPSR…RWQS and EAPRGRDGRSFE. Residues Ser-697, Ser-722, and Ser-737 each carry the phosphoserine modification.

As to quaternary structure, interacts with NPC1L1; bridges NPC1L1 with MYO5B. Interacts with MYO5B; bridges MYO5B with NPC1L1. Interacts with PXN; this complex stabilizes actin dynamics. Interacts with F-actin and G-actin. Interacts with LUZP1 (via C-terminus); both proteins restrict ciliation and may work together to regulate this process. Binds RAB40B (GTP-bound); interaction influences LIMA1 subcellular localization in lamellipodia during cell migration. In terms of processing, phosphorylation of the C-terminal region by MAPK1/MAPK3 reduces its association with F-actin and contributes to actin filament reorganization and enhanced cell motility. Post-translationally, ubiquitinated by the ECS(RAB40B) complex leading to its degradation. In terms of tissue distribution, expressed throughout the kidney, including renal cortex, medulla, and glomeruli. Expressed in glomeruli, tubular epithelial cells, and extraglomerular vascular endothelial cells (at protein level).

The protein localises to the cytoplasm. It is found in the cell junction. The protein resides in the focal adhesion. Its subcellular location is the cytoskeleton. It localises to the stress fiber. The protein localises to the cell membrane. It is found in the cell projection. The protein resides in the ruffle. Its subcellular location is the lamellipodium. In terms of biological role, actin-binding protein involved in actin cytoskeleton regulation and dynamics. Increases the number and size of actin stress fibers and inhibits membrane ruffling. Inhibits actin filament depolymerization. Bundles actin filaments, delays filament nucleation and reduces formation of branched filaments. Acts as a negative regulator of primary cilium formation. Plays a role in cholesterol homeostasis. Influences plasma cholesterol levels through regulation of intestinal cholesterol absorption. May act as a scaffold protein by regulating NPC1L1 transportation, an essential protein for cholesterol absorption, to the plasma membrane by recruiting MYO5B to NPC1L1, and thus facilitates cholesterol uptake. This is LIM domain and actin-binding protein 1 from Rattus norvegicus (Rat).